We begin with the raw amino-acid sequence, 428 residues long: 3-phosphoshikimate 1-carboxyvinyltransferase (428 aa).

3-phosphoshikimate-binding residues include K20, S21, and R25. K20 lines the phosphoenolpyruvate pocket. Phosphoenolpyruvate is bound by residues G93 and R122. Positions 167, 169, 317, and 344 each coordinate 3-phosphoshikimate. Phosphoenolpyruvate is bound at residue Q169. The active-site Proton acceptor is D317. Phosphoenolpyruvate is bound by residues R348 and R390.

The protein belongs to the EPSP synthase family. In terms of assembly, monomer.

Its subcellular location is the cytoplasm. The enzyme catalyses 3-phosphoshikimate + phosphoenolpyruvate = 5-O-(1-carboxyvinyl)-3-phosphoshikimate + phosphate. It functions in the pathway metabolic intermediate biosynthesis; chorismate biosynthesis; chorismate from D-erythrose 4-phosphate and phosphoenolpyruvate: step 6/7. Catalyzes the transfer of the enolpyruvyl moiety of phosphoenolpyruvate (PEP) to the 5-hydroxyl of shikimate-3-phosphate (S3P) to produce enolpyruvyl shikimate-3-phosphate and inorganic phosphate. In Leptospira biflexa serovar Patoc (strain Patoc 1 / ATCC 23582 / Paris), this protein is 3-phosphoshikimate 1-carboxyvinyltransferase.